The primary structure comprises 417 residues: Serpin A3-7 (417 aa).

Positions 1–25 are cleaved as a signal peptide; that stretch reads MRTERTSFLLALGLLVSGFCSRVHC. Residues Asn-103, Asn-183, Asn-221, and Asn-267 are each glycosylated (N-linked (GlcNAc...) asparagine).

Belongs to the serpin family. As to quaternary structure, homodimer.

The protein resides in the cytoplasmic vesicle. Its subcellular location is the secretory vesicle. It is found in the chromaffin granule. The protein localises to the secreted. Serine protease inhibitor. The sequence is that of Serpin A3-7 from Bos taurus (Bovine).